The primary structure comprises 621 residues: MIPRAPPSTQLFSAKTAVNQRSQTFKAFYATIRSLRQPPPEPPESPQAADNDFILSILKANPSLRDTRSYLASFGVQPQRPKTLEDKKLPEIVIPPPPAPKLTASSTKVVKEEKHAPSPVINSILNPIYRRTALVKIQGPFTDVQLDSITRGLVYLEKLGMVSVIVVESDGVPKGEQEERKLLIDEIMRVVTSLEKQGAHARPIVGAVVRLGPKPGSEEESEPGFSPPETHIYPSDLTPIRSSLRAGEIPVLAPFALDSRCRSVRVDANDAIAGLACGMVEAASENPSPAAHEDGSSDSDAIDLTPLRLMIINQRGGVPSYARSGYPHLLINLQQEYDHILQTFDPRWKDSHPHALSDLALARTCLRYMPPTSSAIMVSHKSPSSLIGNLITNKPAVSSSLPHALLQGNLRLTPHTPTLLRRGLPIRVVRSVSDIDKEKMTALLEQSFGRVLDQEAFYGRLEKTLDFVIIAGDYDGTAIVTNEVCPGSSQPISYLDKFAVLPSHQGDGTVDFLWVALHDESYGLGHPFSANPNGGKGGKGEGRDLVWRSRSNNPVNKWYFERSTGHLRMGQWVLFWADAEKRLKVEESLRGSAGLSFIEDWEHGRLGKWADTITKIPSSWK.

A mitochondrion-targeting transit peptide spans 1–77 (MIPRAPPSTQ…RSYLASFGVQ (77 aa)). The disordered stretch occupies residues 213–233 (PKPGSEEESEPGFSPPETHIY). The N-acetyltransferase domain maps to 424–600 (LPIRVVRSVS…GSAGLSFIED (177 aa)).

The protein belongs to the acetyltransferase family.

Its subcellular location is the mitochondrion. It carries out the reaction L-glutamate + acetyl-CoA = N-acetyl-L-glutamate + CoA + H(+). It participates in amino-acid biosynthesis; L-arginine biosynthesis; N(2)-acetyl-L-ornithine from L-glutamate: step 1/4. In terms of biological role, N-acetylglutamate synthase involved in arginine biosynthesis. This Coprinopsis cinerea (strain Okayama-7 / 130 / ATCC MYA-4618 / FGSC 9003) (Inky cap fungus) protein is Amino-acid acetyltransferase, mitochondrial (ARG2).